Reading from the N-terminus, the 626-residue chain is Phosphomethylpyrimidine synthase (626 aa).

Substrate-binding positions include Asn237, Met266, Tyr295, His331, 351-353 (SRG), 392-395 (DGLR), and Glu431. His435 contacts Zn(2+). Substrate is bound at residue Tyr458. His499 serves as a coordination point for Zn(2+). Cys579, Cys582, and Cys587 together coordinate [4Fe-4S] cluster.

This sequence belongs to the ThiC family. In terms of assembly, homodimer. Requires [4Fe-4S] cluster as cofactor.

It catalyses the reaction 5-amino-1-(5-phospho-beta-D-ribosyl)imidazole + S-adenosyl-L-methionine = 4-amino-2-methyl-5-(phosphooxymethyl)pyrimidine + CO + 5'-deoxyadenosine + formate + L-methionine + 3 H(+). It participates in cofactor biosynthesis; thiamine diphosphate biosynthesis. In terms of biological role, catalyzes the synthesis of the hydroxymethylpyrimidine phosphate (HMP-P) moiety of thiamine from aminoimidazole ribotide (AIR) in a radical S-adenosyl-L-methionine (SAM)-dependent reaction. This chain is Phosphomethylpyrimidine synthase, found in Cupriavidus necator (strain ATCC 17699 / DSM 428 / KCTC 22496 / NCIMB 10442 / H16 / Stanier 337) (Ralstonia eutropha).